We begin with the raw amino-acid sequence, 350 residues long: Histidinol-phosphate aminotransferase (350 aa).

Residue Lys-209 is modified to N6-(pyridoxal phosphate)lysine.

The protein belongs to the class-II pyridoxal-phosphate-dependent aminotransferase family. Histidinol-phosphate aminotransferase subfamily. Homodimer. It depends on pyridoxal 5'-phosphate as a cofactor.

It carries out the reaction L-histidinol phosphate + 2-oxoglutarate = 3-(imidazol-4-yl)-2-oxopropyl phosphate + L-glutamate. It participates in amino-acid biosynthesis; L-histidine biosynthesis; L-histidine from 5-phospho-alpha-D-ribose 1-diphosphate: step 7/9. The chain is Histidinol-phosphate aminotransferase from Christiangramia forsetii (strain DSM 17595 / CGMCC 1.15422 / KT0803) (Gramella forsetii).